We begin with the raw amino-acid sequence, 259 residues long: Phosphatidylglycerol--prolipoprotein diacylglyceryl transferase (259 aa).

Transmembrane regions (helical) follow at residues 10–30 (IGLLEIRWYSLAYIIGILFAY), 50–70 (IISWWVTGMILGGRIGYILFY), 86–106 (WKGGMSFHGASLGLFCTMYIF), and 112–132 (IKFLSAIDLCLCAVPVGIFLG). Arg133 is a binding site for a 1,2-diacyl-sn-glycero-3-phospho-(1'-sn-glycerol). 3 consecutive transmembrane segments (helical) span residues 169–189 (LYEAFFEGLLLFVVMNLLFFF), 197–217 (GMLFSIFMIWYGIVRFFIEFV), and 227–247 (ILFNWITMGQLLSFIMVILGI).

Belongs to the Lgt family.

The protein resides in the cell inner membrane. The catalysed reaction is L-cysteinyl-[prolipoprotein] + a 1,2-diacyl-sn-glycero-3-phospho-(1'-sn-glycerol) = an S-1,2-diacyl-sn-glyceryl-L-cysteinyl-[prolipoprotein] + sn-glycerol 1-phosphate + H(+). It participates in protein modification; lipoprotein biosynthesis (diacylglyceryl transfer). Catalyzes the transfer of the diacylglyceryl group from phosphatidylglycerol to the sulfhydryl group of the N-terminal cysteine of a prolipoprotein, the first step in the formation of mature lipoproteins. The chain is Phosphatidylglycerol--prolipoprotein diacylglyceryl transferase from Ehrlichia ruminantium (strain Welgevonden).